A 335-amino-acid chain; its full sequence is Nucleoid-associated protein YejK (335 aa).

It belongs to the YejK family.

Its subcellular location is the cytoplasm. The protein localises to the nucleoid. This chain is Nucleoid-associated protein YejK, found in Escherichia coli (strain K12 / MC4100 / BW2952).